Here is a 315-residue protein sequence, read N- to C-terminus: Porphobilinogen deaminase (315 aa).

At cysteine 242 the chain carries S-(dipyrrolylmethanemethyl)cysteine.

The protein belongs to the HMBS family. Monomer. Requires dipyrromethane as cofactor.

It catalyses the reaction 4 porphobilinogen + H2O = hydroxymethylbilane + 4 NH4(+). Its pathway is porphyrin-containing compound metabolism; protoporphyrin-IX biosynthesis; coproporphyrinogen-III from 5-aminolevulinate: step 2/4. Functionally, tetrapolymerization of the monopyrrole PBG into the hydroxymethylbilane pre-uroporphyrinogen in several discrete steps. The sequence is that of Porphobilinogen deaminase from Syntrophotalea carbinolica (strain DSM 2380 / NBRC 103641 / GraBd1) (Pelobacter carbinolicus).